A 1852-amino-acid polypeptide reads, in one-letter code: MESGSGGGGGGGVAALASFIMNEEELKRKQREKLKKLQATGGNPRPPRSLFFFTLKNPFRKTCINIVEWKPFEIIILLTIFANCVALAVFLPMPEEDTNNTNLTLESLEYIFLVIFTLECFLKIVAYGLLFHEGAYLRNCWNILDFVIVFMGLFTLVVDTINTIAGVPTEKGGGFDMKALRAFRVLRPLRLVSGVPSLQVVMSSILKSMLPLFHIALLVFFMVHIYAIMGLELFKCKMHKTCYYQGTNIIAVREGNEKPSPCAQAGHGRRCTINGTECRAGWPGPNFGITHFDNSCFAMLTVFQCITTESWTDVLYWINDAMGNDWPWIYFLTLILVGSFFILNLVLGALSGEFTKEREESRSRGEYQKLRERQQMDEDLEGYMEWITHAEVMDGDSEALLLLRKDTDSESDSLYQMLDQQVIYFYRLARRWNVVLRRKCHVWVKSKFFNWWVLLVVLLNTLVIAMEHHNQTEGLTSFQDTANVILLACFTIEMVMKMYAFGPRAYFMSIFNRFDCFVVTIGILEIILVVSNIMTPLGISVMRCIRLLRLFKLTRYWTSLNNLVASLLNSVKSIASLLLLLFLFIVIFALLGMQVFGGKFNFPDRVIQRSNFDNFPQALISVFQVLTGEEWDSIMYNGIMAHGGPQSPGILVSIYFIILYVCGNFVLLNVFLAIAVDNLAEAESLTAAQKEKAEEKARRKLMRTLPEKSEEEKALMAKRLMESRSKAEGMPTTAKLKIDEFESNVNEVKDPFPPADFPGDHEEVEPEIPISPRPRPMADLQLKETVVPIAEASSFFIFGPQHKFRKLCHRIVNHTTFTNIILLFILLSSISLAAEDPIDPRSFRNKVLAYADIVFTTVFTIEIVLKMTVYGAFLHTGSFCRNSFNILDLIVVGVSLLSMGMESSTISVVKILRVLRVLRPLRAINRAKGLKHVVQCMFVAIKTIGNIVLVTMLLDFMFACIGVQLFKGKLYYCTDPLQKTAEECQGTFLKHVPNSLHDIEVHQRMWVNSDFNFDNVLNGMLALFTISTFEGWPEILYKAIDSNAVDTGPLYNNRVGISIFFIIYIIIIAFFMMNIFVGFVIVTFQKQGEQEYKDCELDKNQRQCVQYALKARPLKCYIPKNPHQYRVWYFVTSCYFEYLMFFLIMLNTLCLGIQHCNQSDHITKLSDTLNLIFTVLFTGEMIVKLIAFKAKGYFGDPWNVFDFIIVVGSIVDVVLSEVDAALEARGGLWCLHGCAEVNPMQAIAEAENVRVSITFFRLFRVLRLIKLLNRSEGIRNLLWTFIKSFQALPHVGLLIVMLFFIYAVIGMQMFGKVALVDGTEINRNNNFQTFPQAVLLLFRVATGEQWPKVILASMYGKLCDAKSDYGPGEEYTCGSSIAVFYFLSFYILCAFLIINLFVAIIMDNVDYLTRDWSILGPHHLDEFKKIWAEYDPEATGRIKHLDVVTLLRRIQPPLGFGKFCPHRSACKRLISMNMPLNSDGTVTFNATLFALVRTALKIKTEGNFEQANEELRAIIKSIWKRTSMKLLDQVIPPIGEDEVTVGKFYATFLIQEHFRKFMQRQEEYYGYRPTKKNADEIKAGLRSIEEEAAPELHRAISGDLIAEDDMERALEAGEEGIYRRTGGLFGLHTDPFSSEPSSPLSTQMTSQRPLQFVETRLEDIESPPDSVFLPNTEFFPDNMPTTTNTNNNANFVEDMSSRFTFENESLSAAATRNYSYEDIRGSSSYVGGASSVDDRRLSDFTVRTNITQFPYNPSYGPSKNQTATEASPATDKLIQQALRDGGLDSLAEDPKFVSVTRKELAEAINIGMEDMEGMAQGIVNRQSGKVTKRKRRPIPVPPGTKSTKPKENTSAV.

Topologically, residues 1–70 are cytoplasmic; it reads MESGSGGGGG…KTCINIVEWK (70 aa). Residues 57–354 form an I repeat; the sequence is NPFRKTCINI…LVLGALSGEF (298 aa). Residues 71 to 86 form a helical membrane-spanning segment; the sequence is PFEIIILLTIFANCVA. Residues 87–107 lie on the Extracellular side of the membrane; the sequence is LAVFLPMPEEDTNNTNLTLES. N99 and N102 each carry an N-linked (GlcNAc...) asparagine glycan. The helical transmembrane segment at 108-127 threads the bilayer; the sequence is LEYIFLVIFTLECFLKIVAY. Over 128–139 the chain is Cytoplasmic; it reads GLLFHEGAYLRN. A helical membrane pass occupies residues 140–155; that stretch reads CWNILDFVIVFMGLFT. Residues 156 to 176 are Extracellular-facing; sequence LVVDTINTIAGVPTEKGGGFD. Residues 177–195 form a helical membrane-spanning segment; it reads MKALRAFRVLRPLRLVSGV. Residues 196 to 214 are Cytoplasmic-facing; sequence PSLQVVMSSILKSMLPLFH. The helical transmembrane segment at 215–234 threads the bilayer; it reads IALLVFFMVHIYAIMGLELF. The Extracellular segment spans residues 235-326; that stretch reads KCKMHKTCYY…WINDAMGNDW (92 aa). A glycan (N-linked (GlcNAc...) asparagine) is linked at N274. A helical membrane pass occupies residues 327-351; it reads PWIYFLTLILVGSFFILNLVLGALS. The Cytoplasmic portion of the chain corresponds to 352 to 447; that stretch reads GEFTKEREES…RKCHVWVKSK (96 aa). The tract at residues 374–391 is binding to the beta subunit; that stretch reads QQMDEDLEGYMEWITHAE. The stretch at 433-679 is one II repeat; that stretch reads NVVLRRKCHV…VFLAIAVDNL (247 aa). The helical transmembrane segment at 448-466 threads the bilayer; it reads FFNWWVLLVVLLNTLVIAM. The Extracellular portion of the chain corresponds to 467–481; the sequence is EHHNQTEGLTSFQDT. Residue N470 is glycosylated (N-linked (GlcNAc...) asparagine). The chain crosses the membrane as a helical span at residues 482–501; it reads ANVILLACFTIEMVMKMYAF. The Cytoplasmic segment spans residues 502–509; sequence GPRAYFMS. The helical transmembrane segment at 510–528 threads the bilayer; the sequence is IFNRFDCFVVTIGILEIIL. The Extracellular segment spans residues 529 to 538; it reads VVSNIMTPLG. Residues 539–557 form a helical membrane-spanning segment; that stretch reads ISVMRCIRLLRLFKLTRYW. The Cytoplasmic segment spans residues 558–576; the sequence is TSLNNLVASLLNSVKSIAS. Residues 577 to 596 traverse the membrane as a helical segment; that stretch reads LLLLLFLFIVIFALLGMQVF. Topologically, residues 597 to 651 are extracellular; that stretch reads GGKFNFPDRVIQRSNFDNFPQALISVFQVLTGEEWDSIMYNGIMAHGGPQSPGIL. A helical transmembrane segment spans residues 652-675; the sequence is VSIYFIILYVCGNFVLLNVFLAIA. Residues 676 to 815 lie on the Cytoplasmic side of the membrane; it reads VDNLAEAESL…KLCHRIVNHT (140 aa). The stretch at 802–1084 is one III repeat; the sequence is HKFRKLCHRI…IFVGFVIVTF (283 aa). A helical membrane pass occupies residues 816-834; sequence TFTNIILLFILLSSISLAA. Over 835–850 the chain is Extracellular; that stretch reads EDPIDPRSFRNKVLAY. A helical membrane pass occupies residues 851–870; the sequence is ADIVFTTVFTIEIVLKMTVY. Residues 871–882 are Cytoplasmic-facing; sequence GAFLHTGSFCRN. A helical transmembrane segment spans residues 883–901; sequence SFNILDLIVVGVSLLSMGM. The Extracellular portion of the chain corresponds to 902–908; it reads ESSTISV. Residues 909-927 form a helical membrane-spanning segment; the sequence is VKILRVLRVLRPLRAINRA. Residues 928–946 are Cytoplasmic-facing; sequence KGLKHVVQCMFVAIKTIGN. Residues 947-966 traverse the membrane as a helical segment; it reads IVLVTMLLDFMFACIGVQLF. At 967-1056 the chain is on the extracellular side; sequence KGKLYYCTDP…TGPLYNNRVG (90 aa). The segment at 1004–1093 is dihydropyridine binding; the sequence is RMWVNSDFNF…FQKQGEQEYK (90 aa). Residues 1057–1081 form a helical membrane-spanning segment; the sequence is ISIFFIIYIIIIAFFMMNIFVGFVI. Topologically, residues 1082–1134 are cytoplasmic; the sequence is VTFQKQGEQEYKDCELDKNQRQCVQYALKARPLKCYIPKNPHQYRVWYFVTSC. The IV repeat unit spans residues 1121–1405; that stretch reads NPHQYRVWYF…LFVAIIMDNV (285 aa). Residues 1135–1153 traverse the membrane as a helical segment; it reads YFEYLMFFLIMLNTLCLGI. At 1154 to 1168 the chain is on the extracellular side; sequence QHCNQSDHITKLSDT. Residue N1157 is glycosylated (N-linked (GlcNAc...) asparagine). Residues 1169–1188 form a helical membrane-spanning segment; sequence LNLIFTVLFTGEMIVKLIAF. The Cytoplasmic segment spans residues 1189 to 1196; the sequence is KAKGYFGD. The helical transmembrane segment at 1197–1215 threads the bilayer; it reads PWNVFDFIIVVGSIVDVVL. Residues 1216–1252 lie on the Extracellular side of the membrane; the sequence is SEVDAALEARGGLWCLHGCAEVNPMQAIAEAENVRVS. The chain crosses the membrane as a helical span at residues 1253–1271; sequence ITFFRLFRVLRLIKLLNRS. At 1272 to 1290 the chain is on the cytoplasmic side; it reads EGIRNLLWTFIKSFQALPH. Residues 1291–1310 form a helical membrane-spanning segment; sequence VGLLIVMLFFIYAVIGMQMF. The Extracellular segment spans residues 1311-1377; sequence GKVALVDGTE…GEEYTCGSSI (67 aa). A dihydropyridine binding region spans residues 1358–1424; it reads LCDAKSDYGP…LGPHHLDEFK (67 aa). Residues 1370–1413 are phenylalkylamine binding; that stretch reads EYTCGSSIAVFYFLSFYILCAFLIINLFVAIIMDNVDYLTRDWS. A helical transmembrane segment spans residues 1378–1402; sequence AVFYFLSFYILCAFLIINLFVAIIM. At 1403 to 1852 the chain is on the cytoplasmic side; that stretch reads DNVDYLTRDW…TKPKENTSAV (450 aa). The EF-hand domain occupies 1418–1453; sequence HHLDEFKKIWAEYDPEATGRIKHLDVVTLLRRIQPP. Ca(2+) is bound by residues D1431, E1433, T1435, R1437, and D1442. The disordered stretch occupies residues 1820-1852; the sequence is NRQSGKVTKRKRRPIPVPPGTKSTKPKENTSAV.

Belongs to the calcium channel alpha-1 subunit (TC 1.A.1.11) family. As to quaternary structure, multisubunit complex consisting of alpha-1, alpha-2, beta and delta subunits in a 1:1:1:1 ratio. The channel activity is directed by the pore-forming and voltage-sensitive alpha-1 subunit. In many cases, this subunit is sufficient to generate voltage-sensitive calcium channel activity. The auxiliary subunits beta and alpha-2/delta linked by a disulfide bridge regulate the channel activity. An additional gamma subunit is present only in skeletal muscle L-type channel. Post-translationally, may be non-phosphorylated. Skeletal muscle.

The protein localises to the membrane. Voltage-sensitive calcium channels (VSCC) mediate the entry of calcium ions into excitable cells and are also involved in a variety of calcium-dependent processes, including muscle contraction, gene expression, cell motility, cell division and cell death. The isoform alpha-1S gives rise to L-type calcium currents. Long-lasting (L-type) calcium channels belong to the 'high-voltage activated' (HVA) group. They are blocked by dihydropyridines (DHP), phenylalkylamines, and by benzothiazepines. Calcium channels containing the alpha-1S subunit play an important role in excitation-contraction coupling in skeletal muscle. The chain is Dihydropyridine-sensitive L-type skeletal muscle calcium channel subunit alpha-1 from Cyprinus carpio (Common carp).